The following is a 676-amino-acid chain: E3 ubiquitin-protein ligase ICP0 (676 aa).

The RING-type zinc finger occupies 13–52 (CCICLDAITGAARALPCLHAFCLACIRRWLEGRPTCPLCK). Disordered regions lie at residues 101–135 (DLTA…EAAG), 266–486 (HLIP…PAPI), and 555–676 (AAIS…AWRQ). Residues 110–135 (PGAGGEAGAAGGSEAGGGAGGAEAAG) show a composition bias toward gly residues. Over residues 286–303 (SDSDSEGSEDDSWSESEE) the composition is skewed to acidic residues. Low complexity predominate over residues 304-314 (SSSGLSTSDLT). Residues 315–328 (AIDDTETEPETDAE) show a composition bias toward acidic residues. The segment covering 351 to 361 (YVSTRGRQTPA) has biased composition (polar residues). Low complexity-rich tracts occupy residues 375 to 388 (GRAA…SSRS) and 397 to 411 (LPAA…QARA). Residues 422–439 (GAGLGVAAGETAGWGVGS) show a composition bias toward gly residues. Residues 440-450 (EEGRGERRAKL) are compositionally biased toward basic and acidic residues. Over residues 474–484 (TPAPAPAPAPA) the composition is skewed to pro residues. Residues 555-597 (AAISTRAPTPSPAGRAPAADPRRAGAPALAGAARAEAGRNGNP) show a composition bias toward low complexity.

Auto-ubiquitinated. Post-translationally, the strongly acidic region might serve as a transcriptional activation domain, possibly regulated through phosphorylation by casein kinase II.

The catalysed reaction is S-ubiquitinyl-[E2 ubiquitin-conjugating enzyme]-L-cysteine + [acceptor protein]-L-lysine = [E2 ubiquitin-conjugating enzyme]-L-cysteine + N(6)-ubiquitinyl-[acceptor protein]-L-lysine.. Functionally, evades nuclear antiviral defenses triggered by dsDNA viruses. Acts during the initial stages of lytic infection and the reactivation of latent viral genome. Prevents the antiviral effect of nuclear bodies by degrading host PML and SP100. The sequence is that of E3 ubiquitin-protein ligase ICP0 (BICP0) from Bos taurus (Bovine).